The sequence spans 152 residues: Protein IpgF (152 aa).

Residues 1-17 (MSRFVFILLCFIPHLGR) form the signal peptide.

Belongs to the IagB/IpgF/P19 family.

The sequence is that of Protein IpgF (ipgF) from Shigella flexneri.